Consider the following 116-residue polypeptide: Flagellar transcriptional regulator FlhD (116 aa).

This sequence belongs to the FlhD family. Homodimer; disulfide-linked. Forms a heterohexamer composed of two FlhC and four FlhD subunits. Each FlhC binds a FlhD dimer, forming a heterotrimer, and a hexamer assembles by dimerization of two heterotrimers.

The protein resides in the cytoplasm. Its function is as follows. Functions in complex with FlhC as a master transcriptional regulator that regulates transcription of several flagellar and non-flagellar operons by binding to their promoter region. Activates expression of class 2 flagellar genes, including fliA, which is a flagellum-specific sigma factor that turns on the class 3 genes. Also regulates genes whose products function in a variety of physiological pathways. The polypeptide is Flagellar transcriptional regulator FlhD (Serratia proteamaculans (strain 568)).